A 716-amino-acid polypeptide reads, in one-letter code: Fatty acid oxidation complex subunit alpha (716 aa).

The enoyl-CoA hydratase/isomerase stretch occupies residues 1-189 (MIYQSPTIQV…KVGAIDAVVA (189 aa)). Asp296 serves as a coordination point for substrate. Residues 311–716 (QAVNSAAVLG…AATNGSYYPA (406 aa)) are 3-hydroxyacyl-CoA dehydrogenase. NAD(+)-binding positions include Met324, Asp343, 400–402 (VVE), Lys407, and Ser429. His450 (for 3-hydroxyacyl-CoA dehydrogenase activity) is an active-site residue. NAD(+) is bound at residue Asn453. 2 residues coordinate substrate: Asn500 and Tyr660.

It in the N-terminal section; belongs to the enoyl-CoA hydratase/isomerase family. This sequence in the C-terminal section; belongs to the 3-hydroxyacyl-CoA dehydrogenase family. Heterotetramer of two alpha chains (FadB) and two beta chains (FadA).

It catalyses the reaction a (3S)-3-hydroxyacyl-CoA + NAD(+) = a 3-oxoacyl-CoA + NADH + H(+). The enzyme catalyses a (3S)-3-hydroxyacyl-CoA = a (2E)-enoyl-CoA + H2O. The catalysed reaction is a 4-saturated-(3S)-3-hydroxyacyl-CoA = a (3E)-enoyl-CoA + H2O. It carries out the reaction (3S)-3-hydroxybutanoyl-CoA = (3R)-3-hydroxybutanoyl-CoA. It catalyses the reaction a (3Z)-enoyl-CoA = a 4-saturated (2E)-enoyl-CoA. The enzyme catalyses a (3E)-enoyl-CoA = a 4-saturated (2E)-enoyl-CoA. It participates in lipid metabolism; fatty acid beta-oxidation. In terms of biological role, involved in the aerobic and anaerobic degradation of long-chain fatty acids via beta-oxidation cycle. Catalyzes the formation of 3-oxoacyl-CoA from enoyl-CoA via L-3-hydroxyacyl-CoA. It can also use D-3-hydroxyacyl-CoA and cis-3-enoyl-CoA as substrate. The polypeptide is Fatty acid oxidation complex subunit alpha (Shewanella loihica (strain ATCC BAA-1088 / PV-4)).